The sequence spans 398 residues: Circumsporozoite protein (398 aa).

An N-terminal signal peptide occupies residues Met1–Gly23. Residues Ala50–Ala110 form a disordered region. The segment covering Pro66 to Leu93 has biased composition (basic and acidic residues). A required for the binding to heparan sulfate proteoglycans (HSPGs) on the surface of host hepatocytes region spans residues Lys81 to Arg89. Positions Lys92–Pro96 are region I; contains the proteolytic cleavage site. 19 repeat units span residues Ala97–Glu105, Ala106–Glu114, Ala115–Glu123, Ala124–Glu132, Ala133–Glu141, Ala142–Glu150, Ala151–Ala159, Ala160–Glu168, Ala169–Ala177, Ala178–Glu186, Ala187–Glu195, Ala196–Glu204, Ala205–Ala213, Ala214–Glu222, Ala223–Ala231, Ala232–Ala240, Ala241–Arg257, Ala258–Arg274, and Ala275–Gly291. Residues Ala97–Ala110 show a composition bias toward low complexity. Residues Ala97–Ala240 are 16 X 9 AA tandem repeats of A-G-N-N-A-A-[AG]-G-[EA]. The 3 X 17 AA tandem repeats of A-G-N-N-A-A-A-G-E-A-G-A-G-G-A-G-[RG] stretch occupies residues Ala241–Gly291. The segment at Gly248–Ala310 is disordered. Residues Ala284–Ala293 show a composition bias toward gly residues. One can recognise a TSP type-1 domain in the interval Lys324–Ala376. Disulfide bonds link Cys336–Cys370 and Cys340–Cys375. O-linked (Fuc) threonine glycosylation occurs at Thr339. Cys375 carries the GPI-anchor amidated cysteine lipid modification. The propeptide at Ala376–Asn398 is removed in mature form.

This sequence belongs to the plasmodium circumsporozoite protein family. During host cell invasion, proteolytically cleaved at the cell membrane in the region I by a papain-like cysteine protease of parasite origin. Cleavage is triggered by the sporozoite contact with highly sulfated heparan sulfate proteoglycans (HSPGs) present on the host hepatocyte cell surface. Cleavage exposes the TSP type-1 (TSR) domain and is required for productive invasion of host hepatocytes but not for adhesion to the host cell membrane. Cleavage is dispensable for sporozoite development in the oocyst, motility and for traversal of host and vector cells. In terms of processing, O-glycosylated; maybe by POFUT2.

It localises to the cell membrane. It is found in the cytoplasm. In terms of biological role, essential sporozoite protein. In the mosquito vector, required for sporozoite development in the oocyst, migration through the vector hemolymph and entry into the vector salivary glands. In the vertebrate host, required for sporozoite migration through the host dermis and infection of host hepatocytes. Binds to highly sulfated heparan sulfate proteoglycans (HSPGs) on the surface of host hepatocytes. In the vertebrate host, binds to highly sulfated heparan sulfate proteoglycans (HSPGs) on the surface of host hepatocytes and is required for sporozoite invasion of the host hepatocytes. This is Circumsporozoite protein from Plasmodium cynomolgi (strain Ceylon).